The following is a 263-amino-acid chain: Polyglutamine-binding protein 1 (263 aa).

One can recognise a WW domain in the interval Glu46 to Asp80. Phosphoserine is present on Ser94. The tract at residues Ser94–Asp263 is disordered. The segment covering Ala99–Glu173 has biased composition (basic and acidic residues). A run of 14 repeats spans residues Asp104–Ser110, Asp111–Ser117, Asp118–Ser124, Asp125–Ser131, Glu132–Ser138, Asp139–Arg140, Asp141–Arg142, Glu143–Arg144, Asp150–Arg151, Glu152–Arg153, Glu154–Arg155, Asp156–Arg157, Asp158–Arg159, and Asp160–Arg161. Residues Asp104–Ser138 are 5 X 7 AA approximate tandem repeats of D-R-[SG]-H-D-K-S. The interval Asp139–Arg144 is 3 X 2 AA tandem repeats of [DE]-R. Residues Asp150 to Arg161 are 6 X 2 AA tandem repeats of [DE]-R. The interval Tyr243–Asn253 is important for interaction with TXNL4A. Residue Ser245 is modified to Phosphoserine.

In terms of assembly, interacts with POU3F2/Brn-2, ATXN1, TXNL4A, HTT and AR. Interaction with ATXN1 correlates positively with the length of the polyglutamine tract. Interacts with RNA polymerase II large subunit in a phosphorylation-dependent manner. Forms a ternary complex with ATXN1 mutant and phosphorylated RNA polymerase II. Interacts (via C-terminus) with TXNL4A and CD2BP2. Interacts (via WW domain) with ATN1 and SF3B1, and may interact with additional splice factors. Interacts (via WW domain) with WBP11; Leading to reduce interaction between PQBP1 and TXNL4A. Interacts with CAPRIN1. Interacts with DDX1. Interacts with SFPQ. Interacts with KHSRP.

The protein localises to the nucleus. The protein resides in the nucleus speckle. It localises to the cytoplasmic granule. In terms of biological role, intrinsically disordered protein that acts as a scaffold, and which is involved in different processes, such as pre-mRNA splicing, transcription regulation, innate immunity and neuron development. Interacts with splicing-related factors via the intrinsically disordered region and regulates alternative splicing of target pre-mRNA species. May suppress the ability of POU3F2 to transactivate the DRD1 gene in a POU3F2 dependent manner. Can activate transcription directly or via association with the transcription machinery. May be involved in ATXN1 mutant-induced cell death. The interaction with ATXN1 mutant reduces levels of phosphorylated RNA polymerase II large subunit. Involved in the assembly of cytoplasmic stress granule, possibly by participating in the transport of neuronal RNA granules. Also acts as an innate immune sensor of infection by retroviruses, by detecting the presence of reverse-transcribed DNA in the cytosol. Directly binds retroviral reverse-transcribed DNA in the cytosol and interacts with CGAS, leading to activate the cGAS-STING signaling pathway, triggering type-I interferon production. The chain is Polyglutamine-binding protein 1 (PQBP1) from Bos taurus (Bovine).